The sequence spans 516 residues: 1-pyrroline-5-carboxylate dehydrogenase (516 aa).

Residues E287 and C321 contribute to the active site.

Belongs to the aldehyde dehydrogenase family. RocA subfamily.

It carries out the reaction L-glutamate 5-semialdehyde + NAD(+) + H2O = L-glutamate + NADH + 2 H(+). It participates in amino-acid degradation; L-proline degradation into L-glutamate; L-glutamate from L-proline: step 2/2. The chain is 1-pyrroline-5-carboxylate dehydrogenase from Bacillus licheniformis (strain ATCC 14580 / DSM 13 / JCM 2505 / CCUG 7422 / NBRC 12200 / NCIMB 9375 / NCTC 10341 / NRRL NRS-1264 / Gibson 46).